The sequence spans 44 residues: Conotoxin Sr5.5 (44 aa).

Residues 1-19 (MRCLPVFVILLLLIASAPS) form the signal peptide. Residues 20-29 (VDDNAKGTQH) constitute a propeptide that is removed on maturation.

Belongs to the conotoxin T superfamily. In terms of processing, contains 2 disulfide bonds that can be either 'C1-C3, C2-C4' or 'C1-C4, C2-C3', since these disulfide connectivities have been observed for conotoxins with cysteine framework V (for examples, see AC P0DQQ7 and AC P81755). Expressed by the venom duct.

Its subcellular location is the secreted. This chain is Conotoxin Sr5.5, found in Conus spurius (Alphabet cone).